A 613-amino-acid polypeptide reads, in one-letter code: Chaperone protein DnaK (613 aa).

The segment at 578 to 613 (MYQSQATQGTSQNSSQNNNSQNNNGDTVDADFKESK) is disordered. Residues 580-602 (QSQATQGTSQNSSQNNNSQNNNG) are compositionally biased toward low complexity.

The protein belongs to the heat shock protein 70 family.

Functionally, acts as a chaperone. The polypeptide is Chaperone protein DnaK (Picrophilus torridus (strain ATCC 700027 / DSM 9790 / JCM 10055 / NBRC 100828 / KAW 2/3)).